A 160-amino-acid polypeptide reads, in one-letter code: ATP synthase subunit b (160 aa).

The chain crosses the membrane as a helical span at residues 15 to 35 (LAIVIGVLFWFLRGFLGGILE).

The protein belongs to the ATPase B chain family. As to quaternary structure, F-type ATPases have 2 components, F(1) - the catalytic core - and F(0) - the membrane proton channel. F(1) has five subunits: alpha(3), beta(3), gamma(1), delta(1), epsilon(1). F(0) has four main subunits: a(1), b(1), b'(1) and c(10-14). The alpha and beta chains form an alternating ring which encloses part of the gamma chain. F(1) is attached to F(0) by a central stalk formed by the gamma and epsilon chains, while a peripheral stalk is formed by the delta, b and b' chains.

It localises to the cellular thylakoid membrane. In terms of biological role, f(1)F(0) ATP synthase produces ATP from ADP in the presence of a proton or sodium gradient. F-type ATPases consist of two structural domains, F(1) containing the extramembraneous catalytic core and F(0) containing the membrane proton channel, linked together by a central stalk and a peripheral stalk. During catalysis, ATP synthesis in the catalytic domain of F(1) is coupled via a rotary mechanism of the central stalk subunits to proton translocation. Its function is as follows. Component of the F(0) channel, it forms part of the peripheral stalk, linking F(1) to F(0). In Synechococcus sp. (strain CC9902), this protein is ATP synthase subunit b.